We begin with the raw amino-acid sequence, 217 residues long: Thiamine-phosphate synthase (217 aa).

Residues 37–41 (QFREK) and N72 contribute to the 4-amino-2-methyl-5-(diphosphooxymethyl)pyrimidine site. Residues D73 and D92 each contribute to the Mg(2+) site. 4-amino-2-methyl-5-(diphosphooxymethyl)pyrimidine is bound at residue S110. Position 136-138 (136-138 (TVS)) interacts with 2-[(2R,5Z)-2-carboxy-4-methylthiazol-5(2H)-ylidene]ethyl phosphate. K139 provides a ligand contact to 4-amino-2-methyl-5-(diphosphooxymethyl)pyrimidine. 2-[(2R,5Z)-2-carboxy-4-methylthiazol-5(2H)-ylidene]ethyl phosphate is bound by residues G168 and 188–189 (IS).

Belongs to the thiamine-phosphate synthase family. Mg(2+) is required as a cofactor.

It carries out the reaction 2-[(2R,5Z)-2-carboxy-4-methylthiazol-5(2H)-ylidene]ethyl phosphate + 4-amino-2-methyl-5-(diphosphooxymethyl)pyrimidine + 2 H(+) = thiamine phosphate + CO2 + diphosphate. It catalyses the reaction 2-(2-carboxy-4-methylthiazol-5-yl)ethyl phosphate + 4-amino-2-methyl-5-(diphosphooxymethyl)pyrimidine + 2 H(+) = thiamine phosphate + CO2 + diphosphate. The catalysed reaction is 4-methyl-5-(2-phosphooxyethyl)-thiazole + 4-amino-2-methyl-5-(diphosphooxymethyl)pyrimidine + H(+) = thiamine phosphate + diphosphate. It functions in the pathway cofactor biosynthesis; thiamine diphosphate biosynthesis; thiamine phosphate from 4-amino-2-methyl-5-diphosphomethylpyrimidine and 4-methyl-5-(2-phosphoethyl)-thiazole: step 1/1. Its function is as follows. Condenses 4-methyl-5-(beta-hydroxyethyl)thiazole monophosphate (THZ-P) and 2-methyl-4-amino-5-hydroxymethyl pyrimidine pyrophosphate (HMP-PP) to form thiamine monophosphate (TMP). The sequence is that of Thiamine-phosphate synthase from Anoxybacillus flavithermus (strain DSM 21510 / WK1).